An 892-amino-acid chain; its full sequence is Protein RRP6-like 3 (892 aa).

Residues Tyr-119 to Lys-287 enclose the 3'-5' exonuclease domain. Positions Ser-350 to Met-436 constitute an HRDC domain. A disordered region spans residues Val-785–Leu-811.

The protein localises to the cytoplasm. The protein resides in the cytosol. The chain is Protein RRP6-like 3 from Arabidopsis thaliana (Mouse-ear cress).